Here is a 324-residue protein sequence, read N- to C-terminus: Cytosolic sulfotransferase 13 (324 aa).

76-81 (KSGTTW) serves as a coordination point for 3'-phosphoadenylyl sulfate. H134 functions as the Proton acceptor in the catalytic mechanism. 3'-phosphoadenylyl sulfate is bound by residues R156, S164, Y222, and 288–290 (RKG).

This sequence belongs to the sulfotransferase 1 family.

It localises to the cytoplasm. Functionally, sulfotransferase that utilizes 3'-phospho-5'-adenylyl sulfate (PAPS) as sulfonate donor. This Arabidopsis thaliana (Mouse-ear cress) protein is Cytosolic sulfotransferase 13 (SOT13).